Reading from the N-terminus, the 318-residue chain is Biotin synthase (318 aa).

In terms of domain architecture, Radical SAM core spans D40–L260. Residues C55, C59, and C62 each coordinate [4Fe-4S] cluster. C100, C132, C192, and R264 together coordinate [2Fe-2S] cluster.

It belongs to the radical SAM superfamily. Biotin synthase family. As to quaternary structure, homodimer. [4Fe-4S] cluster serves as cofactor. Requires [2Fe-2S] cluster as cofactor.

The catalysed reaction is (4R,5S)-dethiobiotin + (sulfur carrier)-SH + 2 reduced [2Fe-2S]-[ferredoxin] + 2 S-adenosyl-L-methionine = (sulfur carrier)-H + biotin + 2 5'-deoxyadenosine + 2 L-methionine + 2 oxidized [2Fe-2S]-[ferredoxin]. It functions in the pathway cofactor biosynthesis; biotin biosynthesis; biotin from 7,8-diaminononanoate: step 2/2. Functionally, catalyzes the conversion of dethiobiotin (DTB) to biotin by the insertion of a sulfur atom into dethiobiotin via a radical-based mechanism. The sequence is that of Biotin synthase from Ruegeria pomeroyi (strain ATCC 700808 / DSM 15171 / DSS-3) (Silicibacter pomeroyi).